The following is a 227-amino-acid chain: Inner membrane lipoprotein SadB (227 aa).

A signal peptide spans 1–21 (MHKNGKFIPLLALGFTFFLSG). A lipid anchor (N-palmitoyl cysteine) is attached at C22. The S-diacylglycerol cysteine moiety is linked to residue C22. Positions 31–68 (VEEMKEQQKEQETKINLLEKQQKEQEAKINLLEKQQAT) form a coiled coil.

As to quaternary structure, homotrimer.

It localises to the cell inner membrane. Functionally, required for proper surface expression of the autotransporter adhesin SadA. Could be directly involved in the biogenesis of functionally active SadA. This chain is Inner membrane lipoprotein SadB, found in Salmonella typhimurium (strain LT2 / SGSC1412 / ATCC 700720).